The following is a 289-amino-acid chain: uncharacterized protein (289 aa).

The span at 80–96 (PLNESRTSFKNIPQSRN) shows a compositional bias: polar residues. Disordered stretches follow at residues 80-101 (PLNESRTSFKNIPQSRNLPRDY) and 136-157 (PRENFRNDTDIPKDPLRDRMRE).

This is an uncharacterized protein from Acanthamoeba polyphaga (Amoeba).